Reading from the N-terminus, the 499-residue chain is Phenylalanine--tRNA ligase alpha subunit (499 aa).

Residues T342, 381–383, and F422 contribute to the L-phenylalanine site; that span reads QID. E424 lines the Mg(2+) pocket. L-phenylalanine is bound at residue F447.

Belongs to the class-II aminoacyl-tRNA synthetase family. Phe-tRNA synthetase alpha subunit type 2 subfamily. Tetramer of two alpha and two beta subunits. Requires Mg(2+) as cofactor.

It localises to the cytoplasm. It carries out the reaction tRNA(Phe) + L-phenylalanine + ATP = L-phenylalanyl-tRNA(Phe) + AMP + diphosphate + H(+). The chain is Phenylalanine--tRNA ligase alpha subunit from Thermococcus gammatolerans (strain DSM 15229 / JCM 11827 / EJ3).